Consider the following 615-residue polypeptide: Gluconate 2-dehydrogenase flavoprotein (615 aa).

Positions 1 to 22 are cleaved as a signal peptide; it reads MERGERVSVPVSGYSRGEGVTV. His-542 (proton acceptor) is an active-site residue.

This sequence belongs to the GMC oxidoreductase family. As to quaternary structure, heterotrimer. FAD is required as a cofactor.

The protein localises to the cell membrane. The catalysed reaction is D-gluconate + A = 2-dehydro-D-gluconate + AH2. In terms of biological role, part of the heterotrimer that catalyzes the conversion of D-gluconate to 2-dehydro-D-gluconate. This subunit functions as the dehydrogenase. The sequence is that of Gluconate 2-dehydrogenase flavoprotein from Pantoea cypripedii (Pectobacterium cypripedii).